The chain runs to 331 residues: Centriolar satellite-associated tubulin polyglutamylase complex regulator 1 (331 aa).

The segment at 1-111 is required for interaction with PCM1; sequence MLSPERLALP…HCLLQLLCPD (111 aa). The tract at residues 1 to 225 is required for interaction with TPGS1, LRRC49, and TTLL1; it reads MLSPERLALP…SCPPPALVKE (225 aa). The segment at 112 to 331 is required for interaction with TPGS2; the sequence is FPLELTQKAA…STEETDESET (220 aa). The disordered stretch occupies residues 288–331; that stretch reads SPEASCLPSRTPPRVGSPWRPLHHSRKVDGESDGSTEETDESET. Positions 318–331 are enriched in acidic residues; sequence ESDGSTEETDESET. S319 is modified (phosphoserine).

It belongs to the CSTPP1 family. In terms of assembly, interacts with PCM1. Interacts with TTLL1, TPGS1, TPGS2 and LRRC49; the interactions link CSTPP1 to the complex TPGC. Binds to alpha-tubulin.

It is found in the cytoplasm. Its subcellular location is the cytoskeleton. It localises to the microtubule organizing center. The protein localises to the centrosome. The protein resides in the centriolar satellite. Regulator of the tubulin polyglutamylase complex (TPGC) that controls cytoskeletal organization, nuclear shape, and cilium disassembly by balancing microtubule and actin assembly. Regulates the assembly and stability of the TPGC and thereby modulates polyglutamylation of the microtubule, which antagonizes MAP4 binding. In Pongo abelii (Sumatran orangutan), this protein is Centriolar satellite-associated tubulin polyglutamylase complex regulator 1 (CSTPP1).